The sequence spans 184 residues: MMQTILSNGIAMVLIILIINIVYVSFFTIRMILTLKGQRYLAAGISTIEILVYVTGLSLVLDNLDQIQNVIAYALGYGLGVIVGMKIEEKLALGYIMVNVITKELDLDLPKQLREKGYGVTNWVAGGLEGDRTALQILTPRRYELQLYDTIKTLDSKAFIIAYEPKTIHGGFWVKAVKKRRIKE.

3 consecutive transmembrane segments (helical) span residues 9-29 (GIAMVLIILIINIVYVSFFTI), 41-61 (LAAGISTIEILVYVTGLSLVL), and 67-87 (IQNVIAYALGYGLGVIVGMKI).

It belongs to the UPF0316 family.

It is found in the cell membrane. This Bacillus subtilis (strain 168) protein is UPF0316 protein YebE (yebE).